Consider the following 356-residue polypeptide: Phospho-2-dehydro-3-deoxyheptonate aldolase, Tyr-sensitive (356 aa).

It belongs to the class-I DAHP synthase family. It depends on a divalent metal cation as a cofactor.

The enzyme catalyses D-erythrose 4-phosphate + phosphoenolpyruvate + H2O = 7-phospho-2-dehydro-3-deoxy-D-arabino-heptonate + phosphate. It functions in the pathway metabolic intermediate biosynthesis; chorismate biosynthesis; chorismate from D-erythrose 4-phosphate and phosphoenolpyruvate: step 1/7. With respect to regulation, specifically feedback inhibited by tyrosine with 50% inhibition observed at 9 microM tyrosine, pH 7.0. Stereospecific condensation of phosphoenolpyruvate (PEP) and D-erythrose-4-phosphate (E4P) giving rise to 3-deoxy-D-arabino-heptulosonate-7-phosphate (DAHP). The polypeptide is Phospho-2-dehydro-3-deoxyheptonate aldolase, Tyr-sensitive (aroF) (Escherichia coli (strain K12)).